The primary structure comprises 157 residues: SsrA-binding protein (157 aa).

Positions 131–157 (KQLHDKRESVKQRDWQRDKARLMRDKG) are disordered. Positions 132 to 157 (QLHDKRESVKQRDWQRDKARLMRDKG) are enriched in basic and acidic residues.

It belongs to the SmpB family.

It is found in the cytoplasm. Functionally, required for rescue of stalled ribosomes mediated by trans-translation. Binds to transfer-messenger RNA (tmRNA), required for stable association of tmRNA with ribosomes. tmRNA and SmpB together mimic tRNA shape, replacing the anticodon stem-loop with SmpB. tmRNA is encoded by the ssrA gene; the 2 termini fold to resemble tRNA(Ala) and it encodes a 'tag peptide', a short internal open reading frame. During trans-translation Ala-aminoacylated tmRNA acts like a tRNA, entering the A-site of stalled ribosomes, displacing the stalled mRNA. The ribosome then switches to translate the ORF on the tmRNA; the nascent peptide is terminated with the 'tag peptide' encoded by the tmRNA and targeted for degradation. The ribosome is freed to recommence translation, which seems to be the essential function of trans-translation. The sequence is that of SsrA-binding protein from Methylorubrum populi (strain ATCC BAA-705 / NCIMB 13946 / BJ001) (Methylobacterium populi).